Here is a 347-residue protein sequence, read N- to C-terminus: MRIEQDLKLGFKDVLIRPKRSTLKSRSQVDLNRQFTFKHSGKTWSGVPIIAANMDSVASFKMAISLAKHNVMTAVHKHYSVEQWGEFVSSQTADVLKHVMVSSGTSDADFIKLSEILAMSEELNFICIDIANGYSEHLVDYVRKVRQAHPQAVISAGNVVTGDMVEELIIAGADIVKVGIGPGSVCTTRVKTGVGYPQLSAIIECADAAHGLGGQIIGDGGCSCAGDVAKAFGGGADFVMLGGMLAGHEQSGGEVIEQDGKMMVKFYGMSSQSAMDKHSGGVAKYRAAEGKTVLLPFRGSVDNTINDIMGGVRSTCTYVGAASLKELTKRTTFIRVQEQENNVYGKE.

Residue 108 to 131 (ADFIKLSEILAMSEELNFICIDIA) coordinates NADP(+). The K(+) site is built by G181 and G183. C186 (thioimidate intermediate) is an active-site residue. 216–239 (IIGDGGCSCAGDVAKAFGGGADFV) is a binding site for NADP(+).

The protein belongs to the IMPDH/GMPR family. GuaC type 1 subfamily. In terms of assembly, homotetramer.

The enzyme catalyses IMP + NH4(+) + NADP(+) = GMP + NADPH + 2 H(+). Catalyzes the irreversible NADPH-dependent deamination of GMP to IMP. It functions in the conversion of nucleobase, nucleoside and nucleotide derivatives of G to A nucleotides, and in maintaining the intracellular balance of A and G nucleotides. In Shewanella halifaxensis (strain HAW-EB4), this protein is GMP reductase.